The chain runs to 263 residues: Pyrrolysine synthase (263 aa).

L-pyrrolysine is bound by residues Leu8, Val57, Ile64, and Ala107. The NAD(+) site is built by Lys155, Val156, Asp175, Cys210, Pro228, Ile230, and Glu249.

Belongs to the PylD family.

The enzyme catalyses (3R)-3-methyl-D-ornithyl-N(6)-L-lysine + NAD(+) = L-pyrrolysine + NH4(+) + NADH + 2 H(+). The protein operates within amino-acid biosynthesis; L-pyrrolysine biosynthesis. Catalyzes the ultimate step of the pyrrolysine biosynthesis pathway by converting the isopeptide (3R)-3-methyl-D-ornithyl-N(6)-L-lysine to the 22nd proteinogenic amino acid. Is able to use surrogate substrates such as (3R)-D-ornithyl-N(6)-L-lysine in vitro. The sequence is that of Pyrrolysine synthase from Methanosarcina barkeri (strain Fusaro / DSM 804).